Consider the following 145-residue polypeptide: uncharacterized protein (145 aa).

Residue serine 67 is modified to Phosphoserine.

In terms of tissue distribution, expressed in retina and retinoblastoma.

This is an uncharacterized protein from Homo sapiens (Human).